Here is a 554-residue protein sequence, read N- to C-terminus: Valerianol synthase TPS1G (554 aa).

Residues D307 and D311 each contribute to the Mg(2+) site. A DDXXD motif motif is present at residues 326 to 330; that stretch reads VQRWD. Mg(2+)-binding residues include D452, S456, and E460.

The protein belongs to the terpene synthase family. The cofactor is Mg(2+).

The catalysed reaction is (2E,6E)-farnesyl diphosphate + H2O = valerianol + diphosphate. The protein operates within secondary metabolite biosynthesis; terpenoid biosynthesis. Its function is as follows. Terpene synthase that catalyzes the biosynthesis of the terpene valerianol, which is a volatile compound of floral scent. This is Valerianol synthase TPS1G from Camellia hiemalis (Camellia).